Here is a 353-residue protein sequence, read N- to C-terminus: MRIEKDKELMNILKIMAPGTPLREGLENILRAKTGGLLILGDSDQILKLVDGGFKINSEYSPSYVYELAKMDGSIVLSSDLKKILCANAQLIPDSSIPTFETGTRHRTADRVAKQTGAIVIAISQRRNIITVYKGGIKYVLRDSSIILARANQALQTLEKYVAVLDRVVNNLNILEFKDIATLFDVVTAIQRSEMVMRIVSEIERYICELGNEGRLIDMQLSELIKSVEEDGILLIRDYCRSNMEYEDIYKQIQGLSSEELLNLDGLSKIIGYTGVPLVDTLISPRGYRMINKIPRIPSNVIENLVANFNQLKCVMEASYEQLDNVEGIGEARAKAIKNGLRRLREQIMLDKV.

Positions 6 to 144 (DKELMNILKI…GGIKYVLRDS (139 aa)) constitute a DAC domain. ATP-binding positions include G73, L91, and 104-108 (TRHRT).

This sequence belongs to the DisA family. As to quaternary structure, homooctamer. Requires Mg(2+) as cofactor.

It catalyses the reaction 2 ATP = 3',3'-c-di-AMP + 2 diphosphate. Participates in a DNA-damage check-point that is active prior to asymmetric division when DNA is damaged. DisA forms globular foci that rapidly scan along the chromosomes during sporulation, searching for lesions. When a lesion is present, DisA pauses at the lesion site. This triggers a cellular response that culminates in a temporary block in sporulation initiation. Functionally, also has diadenylate cyclase activity, catalyzing the condensation of 2 ATP molecules into cyclic di-AMP (c-di-AMP). c-di-AMP acts as a signaling molecule that couples DNA integrity with progression of sporulation. The rise in c-di-AMP level generated by DisA while scanning the chromosome, operates as a positive signal that advances sporulation; upon encountering a lesion, the DisA focus arrests at the damaged site and halts c-di-AMP synthesis. The sequence is that of DNA integrity scanning protein DisA from Clostridium botulinum (strain Okra / Type B1).